Here is a 146-residue protein sequence, read N- to C-terminus: Large ribosomal subunit protein uL15 (146 aa).

A disordered region spans residues 1 to 54 (MTIKLHDLRPAPGSKTPRTRVGRGEGSKGKTAGRGTKGTKARKQVPTTFEGGQM).

The protein belongs to the universal ribosomal protein uL15 family. Part of the 50S ribosomal subunit.

Functionally, binds to the 23S rRNA. In Mycobacterium ulcerans (strain Agy99), this protein is Large ribosomal subunit protein uL15.